The chain runs to 365 residues: TD and POZ domain-containing protein 3 (365 aa).

The 131-residue stretch at 19 to 149 folds into the MATH domain; that stretch reads KFCYNWTISN…EDQFTICCKV (131 aa). Residues 188 to 250 form the BTB domain; sequence TDCCLLVAGH…EMMGFIYTGK (63 aa).

It belongs to the Tdpoz family.

The protein is TD and POZ domain-containing protein 3 of Mus musculus (Mouse).